Reading from the N-terminus, the 357-residue chain is Aminotransferase TOXF (357 aa).

Arg-87 serves as a coordination point for pyridoxal 5'-phosphate. At Lys-188 the chain carries N6-(pyridoxal phosphate)lysine. Glu-227 is a binding site for pyridoxal 5'-phosphate.

Belongs to the class-IV pyridoxal-phosphate-dependent aminotransferase family. Pyridoxal 5'-phosphate serves as cofactor.

It functions in the pathway mycotoxin biosynthesis; HC-toxin biosynthesis. Its function is as follows. Aminotransferase, part of the diffuse TOX2 gene cluster that mediates the biosynthesis of the HC-toxin, cyclic tetrapeptide of structure cyclo(D-Pro-L-Ala-D-Ala-L-Aeo), where Aeo stands for 2-amino-9,10-epoxi-8-oxodecanoic acid. HC-toxin is a determinant of specificity and virulence in the interaction between the producing fungus and its host, maize. TOXF contributes to the synthesis of 2-amino-9,10-epoxi-8-oxodecanoic acid, an essential precursor for the production of the major forms of HC-toxin by the non-ribosomal peptide synthetase HTS1. The chain is Aminotransferase TOXF (TOXF) from Cochliobolus carbonum (Maize leaf spot fungus).